A 449-amino-acid polypeptide reads, in one-letter code: Sensor protein QseC (449 aa).

Topologically, residues 1-12 are cytoplasmic; sequence MKLTQRLSLRVR. Residues 13-33 form a helical membrane-spanning segment; sequence LTLIFLILVSITWAISSFVAW. Residues 34 to 161 lie on the Periplasmic side of the membrane; it reads RKTTDNVDEL…REDMALAIVA (128 aa). The helical transmembrane segment at 162–182 threads the bilayer; sequence AQLTPWLIALPFMLLILLLLL. Residues 183 to 235 form the HAMP domain; that stretch reads HRELRPLKKLAQALRFRSPESETPLDAKGVPSEVRPLVEALNQLFSRIHSMMV. Over 183-449 the chain is Cytoplasmic; the sequence is HRELRPLKKL…EGGFEAVVRW (267 aa). Residues 243–449 form the Histidine kinase domain; the sequence is DAAHELRSPL…EGGFEAVVRW (207 aa). Phosphohistidine; by autocatalysis is present on His246.

It localises to the cell inner membrane. The catalysed reaction is ATP + protein L-histidine = ADP + protein N-phospho-L-histidine.. Member of a two-component regulatory system QseB/QseC. Activates the flagella regulon by activating transcription of FlhDC. May activate QseB by phosphorylation. In Salmonella typhi, this protein is Sensor protein QseC (qseC).